Here is a 419-residue protein sequence, read N- to C-terminus: Imidazolonepropionase (419 aa).

Fe(3+)-binding residues include histidine 82 and histidine 84. 2 residues coordinate Zn(2+): histidine 82 and histidine 84. The 4-imidazolone-5-propanoate site is built by arginine 91, tyrosine 154, and histidine 187. Tyrosine 154 is a binding site for N-formimidoyl-L-glutamate. A Fe(3+)-binding site is contributed by histidine 252. Histidine 252 contributes to the Zn(2+) binding site. Glutamate 255 is a 4-imidazolone-5-propanoate binding site. A Fe(3+)-binding site is contributed by aspartate 326. Aspartate 326 is a Zn(2+) binding site. N-formimidoyl-L-glutamate-binding residues include asparagine 328 and glycine 330. Serine 331 provides a ligand contact to 4-imidazolone-5-propanoate.

The protein belongs to the metallo-dependent hydrolases superfamily. HutI family. It depends on Zn(2+) as a cofactor. The cofactor is Fe(3+).

It is found in the cytoplasm. It carries out the reaction 4-imidazolone-5-propanoate + H2O = N-formimidoyl-L-glutamate. The protein operates within amino-acid degradation; L-histidine degradation into L-glutamate; N-formimidoyl-L-glutamate from L-histidine: step 3/3. Functionally, catalyzes the hydrolytic cleavage of the carbon-nitrogen bond in imidazolone-5-propanoate to yield N-formimidoyl-L-glutamate. It is the third step in the universal histidine degradation pathway. This chain is Imidazolonepropionase, found in Clostridium tetani (strain Massachusetts / E88).